The following is a 215-amino-acid chain: Flagellin B1 (215 aa).

Positions methionine 1–glycine 12 are excised as a propeptide.

This sequence belongs to the archaeal flagellin family.

Its subcellular location is the archaeal flagellum. Functionally, flagellin is the subunit protein which polymerizes to form the filaments of archaeal flagella. The protein is Flagellin B1 (flaB1) of Methanococcus vannielii (strain ATCC 35089 / DSM 1224 / JCM 13029 / OCM 148 / SB).